Here is a 233-residue protein sequence, read N- to C-terminus: Synaptogyrin-1 (233 aa).

Methionine 1 carries the N-acetylmethionine modification. Topologically, residues 1-23 (MEGGAYGAGKAGGAFDPYTLVRQ) are cytoplasmic. The region spanning 20 to 173 (LVRQPHTILR…QAVLAFQRYQ (154 aa)) is the MARVEL domain. A helical transmembrane segment spans residues 24 to 44 (PHTILRVVSWLFSIVVFGSIV). Topologically, residues 45-71 (NEGYLNSASEGEEFCIYNRNPNACSYG) are lumenal. A helical membrane pass occupies residues 72–92 (VAVGVLAFLTCLLYLALDVYF). Over 93-103 (PQISSVKDRKK) the chain is Cytoplasmic. The helical transmembrane segment at 104 to 124 (AVLSDIGVSAFWAFLWFVGFC) threads the bilayer. The Lumenal portion of the chain corresponds to 125–148 (YLANQWQVSKPKDNPLNEGTDAAR). Residues 149 to 169 (AAIAFSFFSIFTWAGQAVLAF) traverse the membrane as a helical segment. Residues 170–233 (QRYQIGADSA…EPQGYQSQGY (64 aa)) lie on the Cytoplasmic side of the membrane. The disordered stretch occupies residues 194–233 (MPYAPYVEPTGPDPAGMGGTYQQPANTFDTEPQGYQSQGY). Residues 213 to 233 (TYQQPANTFDTEPQGYQSQGY) are compositionally biased toward polar residues.

The protein belongs to the synaptogyrin family.

It localises to the cytoplasmic vesicle. The protein localises to the secretory vesicle. It is found in the synaptic vesicle membrane. Its subcellular location is the melanosome. Functionally, may play a role in regulated exocytosis. Modulates the localization of synaptophysin/SYP into synaptic-like microvesicles and may therefore play a role in synaptic-like microvesicle formation and/or maturation. Involved in the regulation of short-term and long-term synaptic plasticity. The chain is Synaptogyrin-1 from Homo sapiens (Human).